Consider the following 312-residue polypeptide: tRNA dimethylallyltransferase (312 aa).

Glycine 11–serine 18 contributes to the ATP binding site. Threonine 13–serine 18 is a substrate binding site. Interaction with substrate tRNA regions lie at residues aspartate 36–threonine 39, glutamine 160–arginine 164, and arginine 243–arginine 248.

The protein belongs to the IPP transferase family. In terms of assembly, monomer. Mg(2+) serves as cofactor.

The enzyme catalyses adenosine(37) in tRNA + dimethylallyl diphosphate = N(6)-dimethylallyladenosine(37) in tRNA + diphosphate. Its function is as follows. Catalyzes the transfer of a dimethylallyl group onto the adenine at position 37 in tRNAs that read codons beginning with uridine, leading to the formation of N6-(dimethylallyl)adenosine (i(6)A). This is tRNA dimethylallyltransferase from Bordetella avium (strain 197N).